The sequence spans 99 residues: Small ribosomal subunit protein eS24 (99 aa).

The protein belongs to the eukaryotic ribosomal protein eS24 family.

In Methanothrix thermoacetophila (strain DSM 6194 / JCM 14653 / NBRC 101360 / PT) (Methanosaeta thermophila), this protein is Small ribosomal subunit protein eS24.